The following is a 392-amino-acid chain: Anhydro-N-acetylmuramic acid kinase (392 aa).

19–26 is an ATP binding site; the sequence is GTSVDGID.

It belongs to the anhydro-N-acetylmuramic acid kinase family.

It carries out the reaction 1,6-anhydro-N-acetyl-beta-muramate + ATP + H2O = N-acetyl-D-muramate 6-phosphate + ADP + H(+). It functions in the pathway amino-sugar metabolism; 1,6-anhydro-N-acetylmuramate degradation. Its pathway is cell wall biogenesis; peptidoglycan recycling. In terms of biological role, catalyzes the specific phosphorylation of 1,6-anhydro-N-acetylmuramic acid (anhMurNAc) with the simultaneous cleavage of the 1,6-anhydro ring, generating MurNAc-6-P. Is required for the utilization of anhMurNAc either imported from the medium or derived from its own cell wall murein, and thus plays a role in cell wall recycling. The sequence is that of Anhydro-N-acetylmuramic acid kinase from Trichormus variabilis (strain ATCC 29413 / PCC 7937) (Anabaena variabilis).